The chain runs to 263 residues: 3'-5' ssDNA/RNA exonuclease TatD (263 aa).

The a divalent metal cation site is built by Glu-91, His-127, and His-152.

Belongs to the metallo-dependent hydrolases superfamily. TatD-type hydrolase family. TatD subfamily. In terms of assembly, monomer. The cofactor is Mg(2+).

The protein localises to the cytoplasm. 3'-5' exonuclease that prefers single-stranded DNA and RNA. May play a role in the H(2)O(2)-induced DNA damage repair. The protein is 3'-5' ssDNA/RNA exonuclease TatD of Citrobacter rodentium (strain ICC168) (Citrobacter freundii biotype 4280).